The chain runs to 485 residues: Glutathione gamma-glutamylcysteinyltransferase 1 (485 aa).

Residues 1–221 (MAMASLYRRS…GFMLISRPHR (221 aa)) enclose the Peptidase C83 domain. Catalysis depends on residues Cys56, His162, and Asp180.

This sequence belongs to the phytochelatin synthase family. As to expression, expressed in roots and shoots.

It carries out the reaction [Glu(-Cys)](n)-Gly + glutathione + H(+) = [Glu(-Cys)](n+1)-Gly + glycine. With respect to regulation, requires cadmium for activity. Also activated in vitro or in heterologous system by Ag(+), Hg(+), Zn(2+), Cu(2+), Fe(2+) or Fe(3+) ions, but not by Co(2+) or Ni(2+) ions. Its function is as follows. Involved in the synthesis of phytochelatins (PC) and homophytochelatins (hPC), the heavy-metal-binding peptides of plants. Also involved in glutathione-conjugates degradation. The protein is Glutathione gamma-glutamylcysteinyltransferase 1 (PCS1) of Arabidopsis thaliana (Mouse-ear cress).